We begin with the raw amino-acid sequence, 258 residues long: Regulatory protein RecX (258 aa).

It belongs to the RecX family.

The protein resides in the cytoplasm. Functionally, modulates RecA activity. The chain is Regulatory protein RecX from Streptococcus gordonii (strain Challis / ATCC 35105 / BCRC 15272 / CH1 / DL1 / V288).